The following is a 674-amino-acid chain: Multifunctional alkene reductase/demethylase OYE (674 aa).

The FMN site is built by Gly62 and Gln105. The Proton donor role is filled by His175. FMN-binding residues include Arg223 and Lys299. [4Fe-4S] cluster contacts are provided by Cys345, Cys351, and Cys358. Residues Ala391, Gln418, and Arg428 each contribute to the FAD site.

In the N-terminal section; belongs to the NADH:flavin oxidoreductase/NADH oxidase family. [4Fe-4S] cluster serves as cofactor. The cofactor is FAD. FMN is required as a cofactor.

The enzyme catalyses 3-phenylpropanoate + NAD(+) = (E)-cinnamate + NADH + H(+). The catalysed reaction is N-methyl-L-proline + NAD(+) + H2O = L-proline + formaldehyde + NADH + H(+). Its function is as follows. A member of the 2-enoate reductase subfamily of old yellow enzymes (OYE) able to reduce alpha/beta alkenes near electron-withdrawing groups as well as perform oxidative demethylation chemistry. Prefers NADH over NADPH as cosubstrate. May play a role in osmotic stress response in situ. The sequence is that of Multifunctional alkene reductase/demethylase OYE from Caballeronia cordobensis (Burkholderia cordobensis).